A 54-amino-acid chain; its full sequence is MFPNSNGPNKMKALVAPSNSSTTSKTNNNNLPPNGRSSFWSIKQYSETGLPIYI.

The disordered stretch occupies residues 1–38 (MFPNSNGPNKMKALVAPSNSSTTSKTNNNNLPPNGRSS). A compositionally biased stretch (low complexity) spans 17–38 (PSNSSTTSKTNNNNLPPNGRSS).

This is an uncharacterized protein from Dictyostelium discoideum (Social amoeba).